The chain runs to 181 residues: Glucose-1-phosphate adenylyltransferase large subunit 2 (181 aa).

This sequence belongs to the bacterial/plant glucose-1-phosphate adenylyltransferase family. As to quaternary structure, heterotetramer. In terms of tissue distribution, leaves.

The protein resides in the plastid. It is found in the chloroplast. Its subcellular location is the amyloplast. The enzyme catalyses alpha-D-glucose 1-phosphate + ATP + H(+) = ADP-alpha-D-glucose + diphosphate. The protein operates within glycan biosynthesis; starch biosynthesis. Its activity is regulated as follows. Highly active without 3'phosphoglycerate, and is only slightly affected by the activator 3'phosphoglycerate and inhibitor orthophosphate. In terms of biological role, this protein plays a role in synthesis of starch. It catalyzes the synthesis of the activated glycosyl donor, ADP-glucose from Glc-1-P and ATP. The sequence is that of Glucose-1-phosphate adenylyltransferase large subunit 2 from Hordeum vulgare (Barley).